A 293-amino-acid chain; its full sequence is MTAAHDRSENQPGRPGGETTAPYGSAPRRRRVRTRHLLELKQRGEAWPMLTSYDMYTARIFDEAGIPVLLVGDSAANNVYGYDTTVPVTVEELIPLVRAVTRGARSALVVADLPFGSYEASPEQALATAVRFMKEGGAHAVKLEGGRPFARHVEALVNAGIPVMGHIGFTPQSEHTLGGYRVQGRGEQAEELAADARALQDAGAFAVVLEMVSSDSAKRVTAELTIPTVGIGAGPECDAQVLVWTDMAGMNTGRTARFVKRYADLGGTLARAAQEFADEVRGGAFPAPEHSFE.

Residues 1–29 (MTAAHDRSENQPGRPGGETTAPYGSAPRR) are disordered. Positions 73 and 112 each coordinate Mg(2+). 3-methyl-2-oxobutanoate is bound by residues 73–74 (DS), D112, and K142. E144 is a Mg(2+) binding site. The active-site Proton acceptor is E210.

The protein belongs to the PanB family. Homodecamer; pentamer of dimers. Requires Mg(2+) as cofactor.

The protein resides in the cytoplasm. The catalysed reaction is 3-methyl-2-oxobutanoate + (6R)-5,10-methylene-5,6,7,8-tetrahydrofolate + H2O = 2-dehydropantoate + (6S)-5,6,7,8-tetrahydrofolate. The protein operates within cofactor biosynthesis; (R)-pantothenate biosynthesis; (R)-pantoate from 3-methyl-2-oxobutanoate: step 1/2. Catalyzes the reversible reaction in which hydroxymethyl group from 5,10-methylenetetrahydrofolate is transferred onto alpha-ketoisovalerate to form ketopantoate. The chain is 3-methyl-2-oxobutanoate hydroxymethyltransferase from Saccharopolyspora erythraea (strain ATCC 11635 / DSM 40517 / JCM 4748 / NBRC 13426 / NCIMB 8594 / NRRL 2338).